Here is a 309-residue protein sequence, read N- to C-terminus: Aspartate carbamoyltransferase catalytic subunit (309 aa).

Residues arginine 57 and threonine 58 each contribute to the carbamoyl phosphate site. L-aspartate is bound at residue lysine 86. 3 residues coordinate carbamoyl phosphate: arginine 107, histidine 135, and glutamine 138. Residues arginine 168 and arginine 228 each coordinate L-aspartate. Carbamoyl phosphate is bound by residues leucine 267 and proline 268.

It belongs to the aspartate/ornithine carbamoyltransferase superfamily. ATCase family. As to quaternary structure, heterooligomer of catalytic and regulatory chains.

It carries out the reaction carbamoyl phosphate + L-aspartate = N-carbamoyl-L-aspartate + phosphate + H(+). Its pathway is pyrimidine metabolism; UMP biosynthesis via de novo pathway; (S)-dihydroorotate from bicarbonate: step 2/3. Catalyzes the condensation of carbamoyl phosphate and aspartate to form carbamoyl aspartate and inorganic phosphate, the committed step in the de novo pyrimidine nucleotide biosynthesis pathway. This Cenarchaeum symbiosum (strain A) protein is Aspartate carbamoyltransferase catalytic subunit.